A 148-amino-acid polypeptide reads, in one-letter code: Large ribosomal subunit protein bL9 (148 aa).

The protein belongs to the bacterial ribosomal protein bL9 family.

In terms of biological role, binds to the 23S rRNA. This chain is Large ribosomal subunit protein bL9, found in Thermus thermophilus (strain ATCC BAA-163 / DSM 7039 / HB27).